Reading from the N-terminus, the 216-residue chain is Probable phosphatase SPAC513.02 (216 aa).

The Tele-phosphohistidine intermediate role is filled by His15.

This sequence belongs to the phosphoglycerate mutase family. BPG-dependent PGAM subfamily.

It is found in the cytoplasm. It localises to the nucleus. This is Probable phosphatase SPAC513.02 from Schizosaccharomyces pombe (strain 972 / ATCC 24843) (Fission yeast).